A 919-amino-acid polypeptide reads, in one-letter code: PAX3- and PAX7-binding protein 1 (919 aa).

Positions 1–11 are enriched in basic residues; sequence MFRKARRVNVR. Disordered regions lie at residues 1–120, 151–206, and 237–277; these read MFRK…ENEE, KTEL…GGAF, and AREL…RIVF. Serine 16 carries the phosphoserine modification. Residues 16 to 28 show a composition bias toward acidic residues; sequence SEEEERERDEEQE. Residues 49 to 59 show a composition bias toward low complexity; the sequence is RAPAGESLLGP. The span at 75–87 shows a compositional bias: gly residues; the sequence is AEAGGGISGGAEP. Residue lysine 151 forms a Glycyl lysine isopeptide (Lys-Gly) (interchain with G-Cter in SUMO1); alternate linkage. Lysine 151 participates in a covalent cross-link: Glycyl lysine isopeptide (Lys-Gly) (interchain with G-Cter in SUMO2); alternate. Residue serine 160 is modified to Phosphoserine. Residues 163-174 show a composition bias toward basic and acidic residues; sequence PLDKTCHAKDTN. Over residues 185–195 the composition is skewed to acidic residues; sequence GEDEMDMESEK. Phosphoserine is present on serine 193. Over residues 237–258 the composition is skewed to basic and acidic residues; sequence ARELGDFTPHDSEPGKGRLVRE. The segment covering 259–270 has biased composition (acidic residues); it reads DENDASDDEDDD. Residues serine 264, serine 297, serine 559, and serine 560 each carry the phosphoserine modification. Residues 380-560 form a necessary and sufficient for interaction with PAX7 region; that stretch reads TPSNEMAPVT…MADHLEGLSS (181 aa). The segment at 533–566 is disordered; sequence EREARRTRRRQAREQTGQMADHLEGLSSDDEETS. Phosphothreonine is present on threonine 565.

It belongs to the GCF family. In terms of assembly, interacts with PAX3 and PAX7. Interacts with WDR5; associates with a histone methyltransferase (HMT) complex composed at least of RBBP5, ASH2L, SET1, SET2 and KMT2A/MLL1, KMT2D/MLL2, KMT2C/MLL3 and KMT2B/MLL4 through direct interaction with WDR5. Ubiquitously expressed in all tissues tested including skeletal muscle. Expressed in primary myoblasts.

The protein localises to the nucleus. Its function is as follows. Adapter protein linking the transcription factors PAX3 and PAX7 to the histone methylation machinery and involved in myogenesis. Associates with a histone methyltransferase complex that specifically mediates dimethylation and trimethylation of 'Lys-4' of histone H3. Mediates the recruitment of that complex to the transcription factors PAX3 and PAX7 on chromatin to regulate the expression of genes involved in muscle progenitor cells proliferation including ID3 and CDC20. This is PAX3- and PAX7-binding protein 1 (Paxbp1) from Mus musculus (Mouse).